The sequence spans 110 residues: Small ubiquitin-related modifier 3 (110 aa).

Residues Lys-5 and Lys-7 each participate in a glycyl lysine isopeptide (Lys-Gly) (interchain with G-Cter in SUMO2) cross-link. Lys-11 is covalently cross-linked (Glycyl lysine isopeptide (Lys-Gly) (interchain with G-Cter in SUMO); alternate). Lys-11 is covalently cross-linked (Glycyl lysine isopeptide (Lys-Gly) (interchain with G-Cter in SUMO2); alternate). The Ubiquitin-like domain maps to 15–92; the sequence is DHINLKVAGQ…IDVFQQQTGG (78 aa). The segment covering 88–101 has biased composition (polar residues); the sequence is QQTGGSASRGSVPT. The interval 88-110 is disordered; that stretch reads QQTGGSASRGSVPTPNRCPDLCY. Residue Gly-92 forms a Glycyl lysine isopeptide (Gly-Lys) (interchain with K-? in acceptor proteins) linkage. A propeptide spanning residues 93-110 is cleaved from the precursor; that stretch reads SASRGSVPTPNRCPDLCY.

This sequence belongs to the ubiquitin family. SUMO subfamily. Interacts with SAE2 and UBE2I. Covalently attached to a number of proteins. Interacts with USP25 (via ts SIM domain); the interaction sumoylates USP25 and inhibits its ubiquitin hydrolyzing activity. Interacts with BMAL1. In terms of processing, polymeric chains can be formed through Lys-11 cross-linking. Cleavage of precursor form by SENP1, SENP2 or SENP5 is necessary for function.

It localises to the cytoplasm. The protein resides in the nucleus. The protein localises to the PML body. Ubiquitin-like protein which can be covalently attached to target lysines either as a monomer or as a lysine-linked polymer. Does not seem to be involved in protein degradation and may function as an antagonist of ubiquitin in the degradation process. Plays a role in a number of cellular processes such as nuclear transport, DNA replication and repair, mitosis and signal transduction. Covalent attachment to its substrates requires prior activation by the E1 complex SAE1-SAE2 and linkage to the E2 enzyme UBE2I, and can be promoted by an E3 ligase such as PIAS1-4, RANBP2 or CBX4. Plays a role in the regulation of sumoylation status of SETX. This chain is Small ubiquitin-related modifier 3, found in Mus musculus (Mouse).